Consider the following 430-residue polypeptide: RPM1 interacting protein 13 (430 aa).

Residues 1-21 (MGSGNHVDIVDVSSGEEDVDT) form a disordered region. Residues 231–300 (RHRIRQPIPH…QVSQSSHHSS (70 aa)) form a nuclear localization region.

As to quaternary structure, interacts with RPM1 (via its NB-ARC domain). Binds to ARF1 in the nucleus.

It localises to the nucleus. In terms of biological role, resistance protein interactor which positively enhances RPM1-mediated resistance to necrotrophic bacterial pathogens Pseudomonas syringae pv. tomato DC3000 harboring type III effector protein AvrRpm1 or AvrB, but prevents the hypersensitive response (HR) controlled by RPM1. Together with ARF1, promotes leaf senescence and cell death, probably by facilitating the translocation of ARF1 into the nucleus, and activates ROS-related enzymes (e.g. POD, CAT and SOD). This is RPM1 interacting protein 13 from Arabidopsis thaliana (Mouse-ear cress).